The primary structure comprises 337 residues: MSIARRTTLSKFLIEQQRETNNLPADLRLLIEVVARACKAISYNVSKGALGEALGTAGSENVQGEVQKKLDILSNEILLDANEWGGNLAAMASEEMETFFPIPANYPRGEYLLVFDPLDGSSNIDVNVSIGTIFSVLRCPDGKQATEESFLQPGTQQVAAGYAVYGPQTVFVLTTGNGVNCFTLDREVGSWVLTQSNMQIPADTREYAINASNARHWYDPVKRYVDELNAGKDGPRGDNFNMRWIASMVSDVHRILNRGGVFMYPADKRTPDRPGKLRLMYEANPMSFIVEQAGGAATTGTQRIMEVQPTGLHQRVPVFLGSKNEVDRVTGYHQEKQ.

Positions 94, 116, 118, and 119 each coordinate Mg(2+). Substrate contacts are provided by residues 119–122, Asn-210, and Lys-276; that span reads DGSS. Position 282 (Glu-282) interacts with Mg(2+).

It belongs to the FBPase class 1 family. As to quaternary structure, homotetramer. It depends on Mg(2+) as a cofactor.

The protein localises to the cytoplasm. The enzyme catalyses beta-D-fructose 1,6-bisphosphate + H2O = beta-D-fructose 6-phosphate + phosphate. It participates in carbohydrate biosynthesis; gluconeogenesis. The polypeptide is Fructose-1,6-bisphosphatase class 1 (Burkholderia lata (strain ATCC 17760 / DSM 23089 / LMG 22485 / NCIMB 9086 / R18194 / 383)).